A 245-amino-acid chain; its full sequence is Flavin-dependent thymidylate synthase (245 aa).

In terms of domain architecture, ThyX spans 6 to 220 (PRVELLAHTP…PELFAHAGAK (215 aa)). FAD contacts are provided by residues serine 65, 89–91 (RHR), and glutamine 97. DUMP is bound by residues 86-89 (QLVR), 97-101 (QQSQR), and arginine 159. The ThyX motif signature appears at 89–99 (RHRIASFSQQS). FAD contacts are provided by residues 175–177 (NCR) and histidine 181. Position 186 (arginine 186) interacts with dUMP. The active-site Involved in ionization of N3 of dUMP, leading to its activation is the arginine 186.

Belongs to the thymidylate synthase ThyX family. In terms of assembly, homotetramer. It depends on FAD as a cofactor.

It carries out the reaction dUMP + (6R)-5,10-methylene-5,6,7,8-tetrahydrofolate + NADPH + H(+) = dTMP + (6S)-5,6,7,8-tetrahydrofolate + NADP(+). Its pathway is pyrimidine metabolism; dTTP biosynthesis. Its function is as follows. Catalyzes the reductive methylation of 2'-deoxyuridine-5'-monophosphate (dUMP) to 2'-deoxythymidine-5'-monophosphate (dTMP) while utilizing 5,10-methylenetetrahydrofolate (mTHF) as the methyl donor, and NADPH and FADH(2) as the reductant. The protein is Flavin-dependent thymidylate synthase of Nitratidesulfovibrio vulgaris (strain ATCC 29579 / DSM 644 / CCUG 34227 / NCIMB 8303 / VKM B-1760 / Hildenborough) (Desulfovibrio vulgaris).